A 250-amino-acid chain; its full sequence is UPF0736 protein YjbA (250 aa).

The protein belongs to the UPF0736 family.

The polypeptide is UPF0736 protein YjbA (yjbA) (Bacillus subtilis (strain 168)).